Here is a 126-residue protein sequence, read N- to C-terminus: Holo-[acyl-carrier-protein] synthase (126 aa).

The Mg(2+) site is built by Asp9 and Glu58.

The protein belongs to the P-Pant transferase superfamily. AcpS family. Mg(2+) serves as cofactor.

It is found in the cytoplasm. It catalyses the reaction apo-[ACP] + CoA = holo-[ACP] + adenosine 3',5'-bisphosphate + H(+). Its function is as follows. Transfers the 4'-phosphopantetheine moiety from coenzyme A to a Ser of acyl-carrier-protein. This Klebsiella pneumoniae (strain 342) protein is Holo-[acyl-carrier-protein] synthase.